The sequence spans 160 residues: Cyclic pyranopterin monophosphate synthase (160 aa).

Residues 75–77 (LCH) and 113–114 (ME) contribute to the substrate site. The active site involves Asp128.

This sequence belongs to the MoaC family. Homohexamer; trimer of dimers.

The catalysed reaction is (8S)-3',8-cyclo-7,8-dihydroguanosine 5'-triphosphate = cyclic pyranopterin phosphate + diphosphate. Its pathway is cofactor biosynthesis; molybdopterin biosynthesis. In terms of biological role, catalyzes the conversion of (8S)-3',8-cyclo-7,8-dihydroguanosine 5'-triphosphate to cyclic pyranopterin monophosphate (cPMP). This chain is Cyclic pyranopterin monophosphate synthase, found in Methylobacterium nodulans (strain LMG 21967 / CNCM I-2342 / ORS 2060).